We begin with the raw amino-acid sequence, 1514 residues long: Neurexin-1 (1514 aa).

The first 30 residues, 1–30 (MGTALVQRGGCCLLCLSLLLLGCWAELGSG), serve as a signal peptide directing secretion. One can recognise a Laminin G-like 1 domain in the interval 31-217 (LEFPGAEGQW…PPNSGGGSPC (187 aa)). Topologically, residues 31–1438 (LEFPGAEGQW…EVIRESSSTT (1408 aa)) are extracellular. N125 and N190 each carry an N-linked (GlcNAc...) asparagine glycan. The disordered stretch occupies residues 197–221 (VDGGEVKLDDEPPNSGGGSPCEAGE). The EGF-like 1 domain occupies 219 to 256 (AGEEGEGGVCLNGGVCSVVDDQAVCDCSRTGFRGKDCS). 2 cysteine pairs are disulfide-bonded: C228-C243 and C245-C255. Laminin G-like domains lie at 283–480 (IATF…AFKC) and 487–679 (DPIT…KPSC). The Ca(2+) site is built by D329, L346, and M414. 5 cysteine pairs are disulfide-bonded: C444/C480, C650/C679, C687/C698, C692/C707, and C709/C719. One can recognise an EGF-like 2 domain in the interval 683–720 (TAKPCLSNPCKNNGMCRDGWNRYVCDCSGTGYLGRSCE). Laminin G-like domains are found at residues 725–898 (VLSY…IDYC) and 912–1087 (DPVT…ERGC). Ca(2+) is bound by residues D772 and L789. N797 carries N-linked (GlcNAc...) asparagine glycosylation. R848 provides a ligand contact to Ca(2+). 5 disulfide bridges follow: C890-C898, C1059-C1087, C1094-C1105, C1099-C1114, and C1116-C1126. In terms of domain architecture, EGF-like 3 spans 1090–1127 (PSTTCQEDSCSNQGVCLQQWDGFSCDCSMTSFSGPLCN). The Laminin G-like 6 domain maps to 1133 to 1331 (YIFSKGGGQI…DANIAIVGNV (199 aa)). D1183 and V1200 together coordinate Ca(2+). N-linked (GlcNAc...) asparagine glycosylation is present at N1230. Residues I1282 and N1284 each coordinate Ca(2+). A glycan (O-linked (Xyl...) (heparan sulfate) serine) is linked at S1392. The tract at residues 1396–1427 (PSDDEDIDPCEPSSGGLANPTRVGGREPYPGS) is disordered. A helical membrane pass occupies residues 1439 to 1459 (GMVVGIVAAAALCILILLYAM). Residues 1460-1514 (YKYRNRDEGSYHVDESRNYISNSAQSNGAVVKEKQPSSAKSANKNKKNKDKEYYV) are Cytoplasmic-facing. Residues 1481-1507 (NSAQSNGAVVKEKQPSSAKSANKNKKN) are interaction with CASK. A disordered region spans residues 1481 to 1514 (NSAQSNGAVVKEKQPSSAKSANKNKKNKDKEYYV).

It belongs to the neurexin family. Interacts (via laminin G-like domain 2 and/or laminin G-like domain 6) with NLGN1 forming a heterotetramer, where one NLGN1 dimer interacts with one NRXN1 dimer. Also interacts (via laminin G-like domain 2 and/or laminin G-like domain 6) with NLGN2, NLGN3 and NLGN4L; interactions with NLGN1, NLGN2, NLGN3 and NLGN4L are calcium-dependent. Interacts (via cytoplasmic C-terminal region) with CASK (via the PDZ, SH3 and guanylate kinase-like domains). Interacts (via cytoplasmic C-terminus) with CASKIN1 and APBA1. Interacts (via laminin G-like domain 2) with NXPH1 and NXPH3. Alpha-type isoforms (neurexin-1-alpha) interact (via laminin G-like domain 2 and/or laminin G-like domain 6) with DAG1 (via alpha-dystroglycan chain). Interacts with LRRTM1, LRRTM2, LRRTM3 and LRRTM4. Interacts with SYT13 and SYTL1. Interacts with CBLN1, CBLN2 and, less avidly, with CBLN4. Interacts with CLSTN3. In terms of processing, O-glycosylated; contains heparan sulfate. Heparan sulfate attachment is required for synapse development by mediating interactions with neuroligins and LRRTM2.

Its subcellular location is the presynaptic cell membrane. Its function is as follows. Cell surface protein involved in cell-cell-interactions, exocytosis of secretory granules and regulation of signal transmission. Function is isoform-specific. Alpha-type isoforms have a long N-terminus with six laminin G-like domains and play an important role in synaptic signal transmission. Alpha-type isoforms play a role in the regulation of calcium channel activity and Ca(2+)-triggered neurotransmitter release at synapses and at neuromuscular junctions. They play an important role in Ca(2+)-triggered exocytosis of secretory granules in pituitary gland. They may affect their functions at synapses and in endocrine cells via their interactions with proteins from the exocytotic machinery. Likewise, alpha-type isoforms play a role in regulating the activity of postsynaptic NMDA receptors, a subtype of glutamate-gated ion channels. Both alpha-type and beta-type isoforms may play a role in the formation or maintenance of synaptic junctions via their interactions (via the extracellular domains) with neuroligin family members, CBLN1 or CBLN2. In vitro, triggers the de novo formation of presynaptic structures. May be involved in specification of excitatory synapses. Alpha-type isoforms were first identified as receptors for alpha-latrotoxin from spider venom. The protein is Neurexin-1 (Nrxn1) of Mus musculus (Mouse).